Consider the following 292-residue polypeptide: Ubiquinone biosynthesis protein UbiV (292 aa).

[4Fe-4S] cluster is bound by residues Cys-39, Cys-180, Cys-193, and Cys-197.

The protein belongs to the peptidase U32 family. UbiV subfamily. In terms of assembly, forms a heterodimer with UbiU. The cofactor is [4Fe-4S] cluster.

Its pathway is cofactor biosynthesis; ubiquinone biosynthesis. Its function is as follows. Required for O(2)-independent ubiquinone (coenzyme Q) biosynthesis. Together with UbiU, is essential for the C6-hydroxylation reaction in the oxygen-independent ubiquinone biosynthesis pathway. This is Ubiquinone biosynthesis protein UbiV from Escherichia coli (strain K12).